The following is a 492-amino-acid chain: Beclin 1-associated autophagy-related key regulator (492 aa).

A Phosphoserine modification is found at S29. Residues C43–C58 form a cysteine repeats region. A coiled-coil region spans residues D71 to T180. The tract at residues P410–M473 is disordered. Residues A413–R492 form a BATS region. Acidic residues predominate over residues E415–T433. Residue S416 is modified to Phosphoserine. The residue at position 429 (T429) is a Phosphothreonine. The segment covering S448 to M473 has biased composition (low complexity).

It belongs to the ATG14 family. As to quaternary structure, forms homooligomers; homo-oligomerization is essential for the roles in membrane tethering and enhancement of SNARE-mediated fusion. Component of the PI3K (PI3KC3/PI3K-III/class III phosphatidylinositol 3-kinase) complex I (PI3KC3-C1) in which the core composed of the catalytic subunit PIK3C3, the regulatory subunit PIK3R4 and BECN1 is associated with ATG14. PI3KC3-C1 displays a V-shaped architecture with PIK3R4 serving as a bridge between PIK3C3 and the ATG14:BECN1 subcomplex. PI3KC3-C1 can associate with further regulatory subunits. Interacts with PIK3CB. Interacts (via coiled-coil domain) with BECN2 (via coiled-coil domain); this interaction is tighter than BECN2 self-association. Interacts with the STX17-SNAP29 binary t-SNARE complex. Interacts with NRBF2. Interacts with PIK3C3 and BECN1; this interaction is increased in the absence of TMEM39A. Interacts with STEEP1; the interaction is required for trafficking of STING1 from the endoplasmic reticulum. Interacts with ARMC3 (via ARM domains). Post-translationally, ubiquitinated via 'Lys-6', 'Lys-11' and 'Lys-63'-linked polyubiquitin chains on multiple lysines by MARCHF7, leading to ATG14 aggregation and loss of interaction with STX17.

The protein localises to the cytoplasm. It localises to the endoplasmic reticulum membrane. Its subcellular location is the preautophagosomal structure membrane. The protein resides in the cytoplasmic vesicle. It is found in the autophagosome membrane. Functionally, required for both basal and inducible autophagy. Determines the localization of the autophagy-specific PI3-kinase complex PI3KC3-C1. Plays a role in autophagosome formation and MAP1LC3/LC3 conjugation to phosphatidylethanolamine. Promotes BECN1 translocation from the trans-Golgi network to autophagosomes. Enhances PIK3C3 activity in a BECN1-dependent manner. Essential for the autophagy-dependent phosphorylation of BECN1. Stimulates the phosphorylation of BECN1, but suppresses the phosphorylation PIK3C3 by AMPK. Binds to STX17-SNAP29 binary t-SNARE complex on autophagosomes and primes it for VAMP8 interaction to promote autophagosome-endolysosome fusion. Modulates the hepatic lipid metabolism. The chain is Beclin 1-associated autophagy-related key regulator from Homo sapiens (Human).